A 225-amino-acid chain; its full sequence is Redox-sensing transcriptional repressor Rex (225 aa).

Residues 16–55 (IYYRYLNILLDADKKRVSSTELSEAVKVDSATIRRDFSYF) constitute a DNA-binding region (H-T-H motif). 90–95 (GVGNLG) is a binding site for NAD(+).

It belongs to the transcriptional regulatory Rex family. As to quaternary structure, homodimer.

Its subcellular location is the cytoplasm. In terms of biological role, modulates transcription in response to changes in cellular NADH/NAD(+) redox state. This is Redox-sensing transcriptional repressor Rex from Lactiplantibacillus plantarum (strain ATCC BAA-793 / NCIMB 8826 / WCFS1) (Lactobacillus plantarum).